The following is an 84-amino-acid chain: Acid stress protein IbaG (84 aa).

It belongs to the BolA/IbaG family.

In terms of biological role, involved in cell resistance against acid stress. This Escherichia coli O6:H1 (strain CFT073 / ATCC 700928 / UPEC) protein is Acid stress protein IbaG.